The primary structure comprises 103 residues: Phosphoribosyl-ATP pyrophosphatase (103 aa).

The protein belongs to the PRA-PH family.

The protein localises to the cytoplasm. The catalysed reaction is 1-(5-phospho-beta-D-ribosyl)-ATP + H2O = 1-(5-phospho-beta-D-ribosyl)-5'-AMP + diphosphate + H(+). Its pathway is amino-acid biosynthesis; L-histidine biosynthesis; L-histidine from 5-phospho-alpha-D-ribose 1-diphosphate: step 2/9. In Cereibacter sphaeroides (strain KD131 / KCTC 12085) (Rhodobacter sphaeroides), this protein is Phosphoribosyl-ATP pyrophosphatase.